The primary structure comprises 450 residues: Phosphoglucosamine mutase (450 aa).

The Phosphoserine intermediate role is filled by Ser-101. Residues Ser-101, Asp-241, Asp-243, and Asp-245 each coordinate Mg(2+). Ser-101 is modified (phosphoserine).

The protein belongs to the phosphohexose mutase family. Requires Mg(2+) as cofactor. Activated by phosphorylation.

It carries out the reaction alpha-D-glucosamine 1-phosphate = D-glucosamine 6-phosphate. Catalyzes the conversion of glucosamine-6-phosphate to glucosamine-1-phosphate. This Listeria monocytogenes serotype 4b (strain F2365) protein is Phosphoglucosamine mutase.